The following is a 457-amino-acid chain: Cysteine--tRNA ligase (457 aa).

Residue Cys27 participates in Zn(2+) binding. Residues 29-39 (PTVYDFAHIGN) carry the 'HIGH' region motif. Positions 211, 236, and 240 each coordinate Zn(2+). The 'KMSKS' region motif lies at 269-273 (KMSKS). An ATP-binding site is contributed by Lys272.

Belongs to the class-I aminoacyl-tRNA synthetase family. As to quaternary structure, monomer. The cofactor is Zn(2+).

It is found in the cytoplasm. It carries out the reaction tRNA(Cys) + L-cysteine + ATP = L-cysteinyl-tRNA(Cys) + AMP + diphosphate. This Ehrlichia ruminantium (strain Gardel) protein is Cysteine--tRNA ligase.